Consider the following 259-residue polypeptide: Probable ABC transporter permease protein RT0041 (259 aa).

The next 5 helical transmembrane spans lie at 20–40, 49–69, 148–168, 195–215, and 237–257; these read VGIF…PPLY, LFIG…SGAV, VIAA…IGVM, LIDV…ISII, and AVVN…ELLF.

It belongs to the MlaE permease family.

Its subcellular location is the cell inner membrane. Functionally, could be part of an ABC transporter complex. In Rickettsia typhi (strain ATCC VR-144 / Wilmington), this protein is Probable ABC transporter permease protein RT0041.